The following is a 367-amino-acid chain: Ferrochelatase (367 aa).

Residues H226 and E307 each contribute to the Fe cation site.

The protein belongs to the ferrochelatase family.

The protein localises to the cytoplasm. It carries out the reaction heme b + 2 H(+) = protoporphyrin IX + Fe(2+). Its pathway is porphyrin-containing compound metabolism; protoheme biosynthesis; protoheme from protoporphyrin-IX: step 1/1. Catalyzes the ferrous insertion into protoporphyrin IX. The chain is Ferrochelatase from Burkholderia mallei (strain NCTC 10247).